A 479-amino-acid polypeptide reads, in one-letter code: Glycogen synthase (479 aa).

Lys-15 is a binding site for ADP-alpha-D-glucose.

This sequence belongs to the glycosyltransferase 1 family. Bacterial/plant glycogen synthase subfamily.

It catalyses the reaction [(1-&gt;4)-alpha-D-glucosyl](n) + ADP-alpha-D-glucose = [(1-&gt;4)-alpha-D-glucosyl](n+1) + ADP + H(+). It functions in the pathway glycan biosynthesis; glycogen biosynthesis. In terms of biological role, synthesizes alpha-1,4-glucan chains using ADP-glucose. The protein is Glycogen synthase of Nostoc punctiforme (strain ATCC 29133 / PCC 73102).